Here is a 773-residue protein sequence, read N- to C-terminus: Histone-lysine N-methyltransferase mes-2 (773 aa).

Residues 1 to 13 (MSNSEPSTSTPSG) are compositionally biased toward polar residues. The disordered stretch occupies residues 1 to 33 (MSNSEPSTSTPSGKTKKRGKKCETSMGKSKKSK). Residues 1-194 (MSNSEPSTST…TPDQLRLTHM (194 aa)) form an interaction with mes-6 region. The 110-residue stretch at 505–614 (IREDDMRDSQ…SNIIKCRNFG (110 aa)) folds into the CXC domain. The SET domain occupies 616–737 (TRMIQKRTYC…ISEELTFDYS (122 aa)). Residues 749 to 773 (VQTKERSEKPSRPKSQKLSKPMTSE) form a disordered region. Basic and acidic residues predominate over residues 750-759 (QTKERSEKPS).

It belongs to the class V-like SAM-binding methyltransferase superfamily. Histone-lysine methyltransferase family. EZ subfamily. Interacts directly with mes-6 via its N-terminal domain. Forms a heterotrimeric complex with mes-3 and mes-6. Does not interact with mes-4. In terms of tissue distribution, in adults, it is predominantly expressed in the germline, and weakly expressed in intestinal cells. Expressed in the hypoderm.

It localises to the nucleus. It carries out the reaction L-lysyl(27)-[histone H3] + 3 S-adenosyl-L-methionine = N(6),N(6),N(6)-trimethyl-L-lysyl(27)-[histone H3] + 3 S-adenosyl-L-homocysteine + 3 H(+). Functionally, polycomb group (PcG) protein. Catalytic subunit of a the mes-2/mes-3/mes-6 complex, which methylates 'Lys-27' of histone H3, leading to transcriptional repression of the affected target genes. PcG proteins act by forming multiprotein complexes, which are required to maintain the transcriptionally repressive state of homeotic genes throughout development. In association with the nfya-1-NF-Y complex, may play a role in repressing the expression of the homeobox protein egl-5 in tissues such as the head. PcG proteins are not required to initiate repression, but to maintain it during later stages of development. The mes-2/mes-3/mes-6 complex may participate in the global inactivation of the X chromosomes in germline cells. This complex is required to exclude mes-4 from the inactivated X-chromosomes in germline cells. Required for small-RNA-induced H3K27 trimethylation. Involved in the negative regulation of lifespan in a germline-independent fashion. This Caenorhabditis elegans protein is Histone-lysine N-methyltransferase mes-2.